Reading from the N-terminus, the 514-residue chain is Membrane-bound lytic murein transglycosylase F (514 aa).

Positions 1-30 are cleaved as a signal peptide; that stretch reads MLSNNPLITKFRELFTVALVLALLSGCQWQ. Residues 31–271 form a non-LT domain region; sequence DDNLTDLEKI…QLEEKYFGHV (241 aa). Residues 272 to 514 form an LT domain region; that stretch reads GSFDYVDTRA…KTIEDPGPSQ (243 aa). Glu316 is an active-site residue. The tract at residues 482–514 is disordered; the sequence is PVPPRQANVDGSLNNEAAISSAEKTIEDPGPSQ. Positions 490–499 are enriched in polar residues; sequence VDGSLNNEAA.

It in the N-terminal section; belongs to the bacterial solute-binding protein 3 family. This sequence in the C-terminal section; belongs to the transglycosylase Slt family.

Its subcellular location is the cell outer membrane. It carries out the reaction Exolytic cleavage of the (1-&gt;4)-beta-glycosidic linkage between N-acetylmuramic acid (MurNAc) and N-acetylglucosamine (GlcNAc) residues in peptidoglycan, from either the reducing or the non-reducing ends of the peptidoglycan chains, with concomitant formation of a 1,6-anhydrobond in the MurNAc residue.. Its function is as follows. Murein-degrading enzyme that degrades murein glycan strands and insoluble, high-molecular weight murein sacculi, with the concomitant formation of a 1,6-anhydromuramoyl product. Lytic transglycosylases (LTs) play an integral role in the metabolism of the peptidoglycan (PG) sacculus. Their lytic action creates space within the PG sacculus to allow for its expansion as well as for the insertion of various structures such as secretion systems and flagella. This is Membrane-bound lytic murein transglycosylase F from Photobacterium profundum (strain SS9).